A 453-amino-acid chain; its full sequence is CCA-adding enzyme (453 aa).

Positions 53 and 56 each coordinate ATP. 2 residues coordinate CTP: Ser-53 and Lys-56. Mg(2+) contacts are provided by Asp-65, Asp-67, and Asp-119. ATP contacts are provided by His-142, Lys-161, and Tyr-170. Residues His-142, Lys-161, and Tyr-170 each contribute to the CTP site.

It belongs to the tRNA nucleotidyltransferase/poly(A) polymerase family. Archaeal CCA-adding enzyme subfamily. In terms of assembly, homodimer. Requires Mg(2+) as cofactor.

It catalyses the reaction a tRNA precursor + 2 CTP + ATP = a tRNA with a 3' CCA end + 3 diphosphate. The catalysed reaction is a tRNA with a 3' CCA end + 2 CTP + ATP = a tRNA with a 3' CCACCA end + 3 diphosphate. Functionally, catalyzes the addition and repair of the essential 3'-terminal CCA sequence in tRNAs without using a nucleic acid template. Adds these three nucleotides in the order of C, C, and A to the tRNA nucleotide-73, using CTP and ATP as substrates and producing inorganic pyrophosphate. tRNA 3'-terminal CCA addition is required both for tRNA processing and repair. Also involved in tRNA surveillance by mediating tandem CCA addition to generate a CCACCA at the 3' terminus of unstable tRNAs. While stable tRNAs receive only 3'-terminal CCA, unstable tRNAs are marked with CCACCA and rapidly degraded. This is CCA-adding enzyme from Pyrococcus furiosus (strain ATCC 43587 / DSM 3638 / JCM 8422 / Vc1).